Consider the following 316-residue polypeptide: Transaldolase (316 aa).

The Schiff-base intermediate with substrate role is filled by K132.

The protein belongs to the transaldolase family. Type 1 subfamily. In terms of assembly, homodimer.

It localises to the cytoplasm. It carries out the reaction D-sedoheptulose 7-phosphate + D-glyceraldehyde 3-phosphate = D-erythrose 4-phosphate + beta-D-fructose 6-phosphate. The protein operates within carbohydrate degradation; pentose phosphate pathway; D-glyceraldehyde 3-phosphate and beta-D-fructose 6-phosphate from D-ribose 5-phosphate and D-xylulose 5-phosphate (non-oxidative stage): step 2/3. In terms of biological role, transaldolase is important for the balance of metabolites in the pentose-phosphate pathway. This Aliivibrio fischeri (strain MJ11) (Vibrio fischeri) protein is Transaldolase.